A 137-amino-acid chain; its full sequence is Outer membrane protein assembly factor BamE (137 aa).

Positions 1–18 (MQVKTLLGATFLALSLAS) are cleaved as a signal peptide. Cys-19 is lipidated: N-palmitoyl cysteine. Cys-19 is lipidated: S-diacylglycerol cysteine.

It belongs to the BamE family. As to quaternary structure, part of the Bam complex.

The protein localises to the cell outer membrane. Functionally, part of the outer membrane protein assembly complex, which is involved in assembly and insertion of beta-barrel proteins into the outer membrane. The sequence is that of Outer membrane protein assembly factor BamE from Haemophilus influenzae (strain ATCC 51907 / DSM 11121 / KW20 / Rd).